Here is a 1254-residue protein sequence, read N- to C-terminus: Protein transport protein Sec31A (1254 aa).

7 WD repeats span residues 4 to 47, 64 to 111, 120 to 160, 166 to 206, 209 to 254, 258 to 298, and 301 to 341; these read KEIN…EIFE, SSPH…AGDS, KHTG…SPMT, QPQE…LIIK, DHSN…SPLK, NHTR…VLYE, and TSTQ…NDNA. Residues 364-383 are compositionally biased toward low complexity; sequence TLPPLQLPQQTSPQSTITPL. The tract at residues 364 to 386 is disordered; the sequence is TLPPLQLPQQTSPQSTITPLKKP. One copy of the WD 8; interaction with SEC13 repeat lies at 397-428; sequence SFAFGGKLVTLDNIKPTAQQPQQTAAHVVHIS. Disordered stretches follow at residues 818–892, 983–1008, and 1058–1125; these read PMQT…QSPA, CFQH…GTQH, and PPAP…PGAP. Residues 832–846 show a composition bias toward low complexity; sequence AQPAAPAVPPQYYQQ. Polar residues-rich tracts occupy residues 847 to 863 and 872 to 881; these read GRSA…TPTA and VPSSDPQGDS. Positions 1080 to 1091 are enriched in low complexity; the sequence is QTLQPQQQVPDQ.

It belongs to the WD repeat SEC31 family. As to quaternary structure, COPII is composed of at least 5 proteins: the SEC23/24 complex, the SEC13/31 complex and SAR1. SEC13 and SEC31 make a 2:2 tetramer that forms the edge element of the COPII outer coat. The tetramer self-assembles in multiple copies to form the complete polyhedral cage. Interacts (via WD 8) with SEC13.

The protein resides in the cytoplasm. Its subcellular location is the cytoplasmic vesicle. The protein localises to the COPII-coated vesicle membrane. It is found in the endoplasmic reticulum membrane. Functionally, component of the coat protein complex II (COPII) which promotes the formation of transport vesicles from the endoplasmic reticulum (ER). The coat has two main functions, the physical deformation of the endoplasmic reticulum membrane into vesicles and the selection of cargo molecules. This is Protein transport protein Sec31A (sec31a) from Danio rerio (Zebrafish).